We begin with the raw amino-acid sequence, 336 residues long: Probable long-chain-alcohol O-fatty-acyltransferase 8 (336 aa).

The next 8 membrane-spanning stretches (helical) occupy residues 7-27, 38-58, 59-79, 82-102, 117-135, 152-172, 228-248, and 284-304; these read SFVK…YIPS, SVLP…FTIF, SSTT…LFAF, GPLL…CLPI, WVFF…VHNY, LYLV…IILG, MGCW…YFYI, and PMLS…FLFF.

Belongs to the wax synthase family.

It is found in the membrane. It carries out the reaction a long chain fatty alcohol + a fatty acyl-CoA = a wax ester + CoA. In terms of biological role, catalyzes the final step in the synthesis of long-chain linear esters (waxes). This Arabidopsis thaliana (Mouse-ear cress) protein is Probable long-chain-alcohol O-fatty-acyltransferase 8.